Here is a 368-residue protein sequence, read N- to C-terminus: 3-dehydroquinate synthase (368 aa).

NAD(+)-binding positions include 80–85 (DAESAK), 114–118 (GAATD), 138–139 (TT), K151, and K160. Zn(2+) is bound by residues E193, H255, and H271.

This sequence belongs to the sugar phosphate cyclases superfamily. Dehydroquinate synthase family. Co(2+) is required as a cofactor. It depends on Zn(2+) as a cofactor. NAD(+) serves as cofactor.

It localises to the cytoplasm. It carries out the reaction 7-phospho-2-dehydro-3-deoxy-D-arabino-heptonate = 3-dehydroquinate + phosphate. It participates in metabolic intermediate biosynthesis; chorismate biosynthesis; chorismate from D-erythrose 4-phosphate and phosphoenolpyruvate: step 2/7. Catalyzes the conversion of 3-deoxy-D-arabino-heptulosonate 7-phosphate (DAHP) to dehydroquinate (DHQ). This is 3-dehydroquinate synthase from Corynebacterium jeikeium (strain K411).